Here is a 513-residue protein sequence, read N- to C-terminus: MGHSVAGVCLEEPAVLTAFPSLLHPQDPPQQRDRILFVTAELSDFVKVGGLGDFSAALPRVLKREHSVRVLLPGYRQVLERCRDLRIIGSLPGRAAIPPCEIGLVTLDDGLEVMLVLCPLLYEREGTPYMDDQGNDWPDNHLRFARLCLAAAEIAGGRGAQGWQPGLVHANDWPSALTPAYMAWNGVRTPSLFTIHNLAYQGLCDLQCSAELGLPDEALSHESMEFHGRLSFLKAGIAHAHHITTVSETYAQEITTPEYGCGLHGILKYKVEKRQLSGIVNGIDDSWQPHCDPHLVACFSARQWAGKRANTRYVEERFGLEPGKGPLFAVVSRLVQQKGIDLTLEISDALLQAGGRLVSIGRGEPNLEKAMLELARRHPGQVGVHIGFDETEARRIYAGSDFLLMPSRYEPCGLSQLYAQCFGSLPIARCTGGLADTIVDGVTGFLFREETAQSYLDAVMRAINVYHCPSLLNAMRCKAMAAPMFWSDSVEPYNRLYRRLLRNTAPALRGVRQ.

Position 47 (lysine 47) interacts with ADP-alpha-D-glucose.

This sequence belongs to the glycosyltransferase 1 family. Bacterial/plant glycogen synthase subfamily.

It catalyses the reaction [(1-&gt;4)-alpha-D-glucosyl](n) + ADP-alpha-D-glucose = [(1-&gt;4)-alpha-D-glucosyl](n+1) + ADP + H(+). The protein operates within glycan biosynthesis; glycogen biosynthesis. Functionally, synthesizes alpha-1,4-glucan chains using ADP-glucose. This Pseudomonas aeruginosa (strain ATCC 15692 / DSM 22644 / CIP 104116 / JCM 14847 / LMG 12228 / 1C / PRS 101 / PAO1) protein is Glycogen synthase.